The following is a 25-amino-acid chain: GVVDILKGAAKDLAGHLATKVMDKL.

Position 25 is a leucine amide (leucine 25).

Belongs to the frog skin active peptide (FSAP) family. Ocellatin subfamily. Expressed by the skin glands.

The protein resides in the secreted. In terms of biological role, shows a low activity in stimulating insulin release from rat BRIN-BD11 beta cells, and acts without loss of integrity of the plasma membrane. Does not show antibacterial (E.coli and S.aureus). Does not show hemolytic activity against human erythrocytes. The protein is Ocellatin-L2 of Leptodactylus laticeps (Santa Fe frog).